The following is a 390-amino-acid chain: Formate-dependent phosphoribosylglycinamide formyltransferase (390 aa).

N(1)-(5-phospho-beta-D-ribosyl)glycinamide contacts are provided by residues glutamate 14–leucine 15 and glutamate 74. Residues arginine 106, lysine 147, serine 152–glutamine 157, glutamate 187–isoleucine 190, and glutamate 195 each bind ATP. In terms of domain architecture, ATP-grasp spans aspartate 111–methionine 304. 2 residues coordinate Mg(2+): glutamate 263 and glutamate 275. Residues aspartate 282, lysine 351, and arginine 358–arginine 359 each bind N(1)-(5-phospho-beta-D-ribosyl)glycinamide.

It belongs to the PurK/PurT family. Homodimer.

The catalysed reaction is N(1)-(5-phospho-beta-D-ribosyl)glycinamide + formate + ATP = N(2)-formyl-N(1)-(5-phospho-beta-D-ribosyl)glycinamide + ADP + phosphate + H(+). It participates in purine metabolism; IMP biosynthesis via de novo pathway; N(2)-formyl-N(1)-(5-phospho-D-ribosyl)glycinamide from N(1)-(5-phospho-D-ribosyl)glycinamide (formate route): step 1/1. Its function is as follows. Involved in the de novo purine biosynthesis. Catalyzes the transfer of formate to 5-phospho-ribosyl-glycinamide (GAR), producing 5-phospho-ribosyl-N-formylglycinamide (FGAR). Formate is provided by PurU via hydrolysis of 10-formyl-tetrahydrofolate. In Erythrobacter litoralis (strain HTCC2594), this protein is Formate-dependent phosphoribosylglycinamide formyltransferase.